Here is a 63-residue protein sequence, read N- to C-terminus: Cytochrome c oxidase subunit 5C (63 aa).

The helical transmembrane segment at 16 to 34 (VVKEICIGLTLGLVAGGLW) threads the bilayer.

This sequence belongs to the cytochrome c oxidase subunit 5C family.

Its subcellular location is the mitochondrion inner membrane. Functionally, this protein is one of the nuclear-coded polypeptide chains of cytochrome c oxidase, the terminal oxidase in mitochondrial electron transport. This chain is Cytochrome c oxidase subunit 5C (COX5C), found in Oryza sativa subsp. japonica (Rice).